The following is a 454-amino-acid chain: COBRA-like protein 6 (454 aa).

A signal peptide spans 1 to 24; it reads MGAMLNLLLVVTVILCSILSPTRF. Residues Asn-104, Asn-191, Asn-320, Asn-355, and Asn-391 are each glycosylated (N-linked (GlcNAc...) asparagine). A lipid anchor (GPI-anchor amidated serine) is attached at Ser-429. Residues 430–454 constitute a propeptide, removed in mature form; the sequence is SSSSAVISSVSVVFCFLLHHLLLLV.

It belongs to the COBRA family. Expressed in flowers and siliques.

The protein resides in the cell membrane. This is COBRA-like protein 6 (COBL6) from Arabidopsis thaliana (Mouse-ear cress).